Reading from the N-terminus, the 327-residue chain is Phosphate acyltransferase (327 aa).

Belongs to the PlsX family. In terms of assembly, homodimer. Probably interacts with PlsY.

The protein localises to the cytoplasm. The enzyme catalyses a fatty acyl-[ACP] + phosphate = an acyl phosphate + holo-[ACP]. Its pathway is lipid metabolism; phospholipid metabolism. Its function is as follows. Catalyzes the reversible formation of acyl-phosphate (acyl-PO(4)) from acyl-[acyl-carrier-protein] (acyl-ACP). This enzyme utilizes acyl-ACP as fatty acyl donor, but not acyl-CoA. This Thermotoga neapolitana (strain ATCC 49049 / DSM 4359 / NBRC 107923 / NS-E) protein is Phosphate acyltransferase.